Here is an 803-residue protein sequence, read N- to C-terminus: Ubiquitin carboxyl-terminal hydrolase 45 (803 aa).

The tract at residues 1-34 (MRLKDPFSLKTADMTKRSNKPKKPRDEDSSDEVG) is disordered. The UBP-type zinc-finger motif lies at 36–153 (LTCQHVSRAV…QTLDFLQKQS (118 aa)). Residues C38, H40, C62, C65, C85, C88, C93, H100, H104, H113, C126, and C129 each coordinate Zn(2+). The 611-residue stretch at 192 to 802 (KGINNLGNTC…QAYLLFYEEL (611 aa)) folds into the USP domain. The active-site Nucleophile is the C201. Positions 394–554 (PTNPARLGKS…LPSIRPQQGG (161 aa)) are disordered. A compositionally biased stretch (basic and acidic residues) spans 403–417 (SGREQDSLTSHDDSL). 2 stretches are compositionally biased toward polar residues: residues 419-440 (AHSQ…SRHS) and 469-480 (SYRTDTMGSQSD). Positions 502 to 531 (SEWSPRIPSVSSHSSTSDKTSITTTLSTTT) are enriched in low complexity. The span at 532–545 (HNPSLKSNPSSTPL) shows a compositional bias: polar residues. The active-site Proton acceptor is the H739.

It belongs to the peptidase C19 family. Retina.

It localises to the photoreceptor inner segment. It is found in the cytoplasm. Its subcellular location is the nucleus. It catalyses the reaction Thiol-dependent hydrolysis of ester, thioester, amide, peptide and isopeptide bonds formed by the C-terminal Gly of ubiquitin (a 76-residue protein attached to proteins as an intracellular targeting signal).. In terms of biological role, catalyzes the deubiquitination of SPDL1. Plays a role in the repair of UV-induced DNA damage via deubiquitination of ERCC1, promoting its recruitment to DNA damage sites. May be involved in the maintenance of photoreceptor function. May play a role in normal retinal development. This Danio rerio (Zebrafish) protein is Ubiquitin carboxyl-terminal hydrolase 45.